The sequence spans 419 residues: L-rhamnose isomerase (419 aa).

Mn(2+) contacts are provided by His-262, Asp-294, and Asp-296.

This sequence belongs to the rhamnose isomerase family. As to quaternary structure, homotetramer. It depends on Mn(2+) as a cofactor.

The protein localises to the cytoplasm. It catalyses the reaction L-rhamnopyranose = L-rhamnulose. Its pathway is carbohydrate degradation; L-rhamnose degradation; glycerone phosphate from L-rhamnose: step 1/3. Functionally, catalyzes the interconversion of L-rhamnose and L-rhamnulose. This chain is L-rhamnose isomerase, found in Salmonella typhimurium (strain LT2 / SGSC1412 / ATCC 700720).